The sequence spans 192 residues: GTP cyclohydrolase 1 (192 aa).

Zn(2+) is bound by residues Cys-76, His-79, and Cys-148.

Belongs to the GTP cyclohydrolase I family. In terms of assembly, toroid-shaped homodecamer, composed of two pentamers of five dimers.

It carries out the reaction GTP + H2O = 7,8-dihydroneopterin 3'-triphosphate + formate + H(+). It participates in cofactor biosynthesis; 7,8-dihydroneopterin triphosphate biosynthesis; 7,8-dihydroneopterin triphosphate from GTP: step 1/1. This is GTP cyclohydrolase 1 from Carboxydothermus hydrogenoformans (strain ATCC BAA-161 / DSM 6008 / Z-2901).